Reading from the N-terminus, the 1113-residue chain is Coiled-coil domain-containing protein 158 (1113 aa).

The span at 1–14 shows a compositional bias: polar residues; it reads MESKAWESNNEDLL. The segment at 1 to 26 is disordered; sequence MESKAWESNNEDLLSSSGVTSNGGSS. Over residues 15-26 the composition is skewed to low complexity; the sequence is SSSGVTSNGGSS. 2 coiled-coil regions span residues 72-183 and 243-833; these read GKEH…LSHE and VEDQ…QEQE. Disordered stretches follow at residues 848 to 902 and 955 to 1062; these read LQGP…DPTR and CHRS…IETT. Composition is skewed to polar residues over residues 867-894, 955-974, 994-1017, 1024-1040, and 1053-1062; these read ASVTRSHSNVPSSQSTASFLSHHSTKAN, CHRSNNSLRDSTEGSKSSET, FTFTSAASPSVKNSASRSFNSSPK, LLTSSVEGSIGSTSQYR, and DSQSPPIETT. The stretch at 1061–1113 forms a coiled coil; sequence TTGKTCRKLQNRLESLQTLVEDLQLKNQAMSSMIRNQEKRIQKVKDQEKMLLK.

In Homo sapiens (Human), this protein is Coiled-coil domain-containing protein 158 (CCDC158).